A 78-amino-acid polypeptide reads, in one-letter code: Small ribosomal subunit protein bS18 (78 aa).

It belongs to the bacterial ribosomal protein bS18 family. In terms of assembly, part of the 30S ribosomal subunit. Forms a tight heterodimer with protein bS6.

Binds as a heterodimer with protein bS6 to the central domain of the 16S rRNA, where it helps stabilize the platform of the 30S subunit. The polypeptide is Small ribosomal subunit protein bS18 (Geobacillus kaustophilus (strain HTA426)).